Consider the following 153-residue polypeptide: MVKLVLVNPQIPPNTGNIARTCAATGTELHLVGPLGFELGDRYLKRAGLDYWPYVDLHYHNSCEEFITHWRGQGGNLLGFSVTGTVNFWDYTYQSTDWLMMGSETDGLPQMMRDLSTQLLCIPMPHSEVRSLNLASSAAIALFEAGRQLRSLG.

Glycine 102, isoleucine 122, and serine 131 together coordinate S-adenosyl-L-methionine.

This sequence belongs to the class IV-like SAM-binding methyltransferase superfamily. RNA methyltransferase TrmH family. TrmL subfamily.

It localises to the cytoplasm. It catalyses the reaction cytidine(34) in tRNA + S-adenosyl-L-methionine = 2'-O-methylcytidine(34) in tRNA + S-adenosyl-L-homocysteine + H(+). It carries out the reaction 5-carboxymethylaminomethyluridine(34) in tRNA(Leu) + S-adenosyl-L-methionine = 5-carboxymethylaminomethyl-2'-O-methyluridine(34) in tRNA(Leu) + S-adenosyl-L-homocysteine + H(+). In terms of biological role, could methylate the ribose at the nucleotide 34 wobble position in tRNA. The protein is Putative tRNA (cytidine(34)-2'-O)-methyltransferase of Synechocystis sp. (strain ATCC 27184 / PCC 6803 / Kazusa).